A 498-amino-acid polypeptide reads, in one-letter code: Signal recognition particle receptor FtsY (498 aa).

Disordered regions lie at residues 1–130 (MGLF…PNQS) and 147–200 (KVES…YNRS). A compositionally biased stretch (low complexity) spans 36–46 (ALLAETAETAE). Residues 103–120 (SENSVAAVQNNTETMPSQ) show a composition bias toward polar residues. Residues 301 to 308 (GVNGVGKT), 383 to 387 (DTAGR), and 447 to 450 (TKID) contribute to the GTP site.

Belongs to the GTP-binding SRP family. FtsY subfamily. In terms of assembly, part of the signal recognition particle protein translocation system, which is composed of SRP and FtsY.

It is found in the cell membrane. It localises to the cytoplasm. It catalyses the reaction GTP + H2O = GDP + phosphate + H(+). In terms of biological role, involved in targeting and insertion of nascent membrane proteins into the cytoplasmic membrane. Acts as a receptor for the complex formed by the signal recognition particle (SRP) and the ribosome-nascent chain (RNC). The protein is Signal recognition particle receptor FtsY of Streptococcus mutans serotype c (strain ATCC 700610 / UA159).